Reading from the N-terminus, the 511-residue chain is Histidine ammonia-lyase (511 aa).

Residues 142-144 (ASG) constitute a cross-link (5-imidazolinone (Ala-Gly)). Ser-143 carries the post-translational modification 2,3-didehydroalanine (Ser).

The protein belongs to the PAL/histidase family. Contains an active site 4-methylidene-imidazol-5-one (MIO), which is formed autocatalytically by cyclization and dehydration of residues Ala-Ser-Gly.

The protein resides in the cytoplasm. The enzyme catalyses L-histidine = trans-urocanate + NH4(+). Its pathway is amino-acid degradation; L-histidine degradation into L-glutamate; N-formimidoyl-L-glutamate from L-histidine: step 1/3. The polypeptide is Histidine ammonia-lyase (Phenylobacterium zucineum (strain HLK1)).